Reading from the N-terminus, the 219-residue chain is Ribosome maturation factor RimP (219 aa).

Residues 195–219 form a disordered region; that stretch reads EGRIPGDDLGAEPEDAASTETQEKK.

This sequence belongs to the RimP family.

It is found in the cytoplasm. In terms of biological role, required for maturation of 30S ribosomal subunits. The chain is Ribosome maturation factor RimP from Brucella melitensis biotype 2 (strain ATCC 23457).